Here is a 583-residue protein sequence, read N- to C-terminus: Lamin-B3 (583 aa).

A disordered region spans residues 1 to 30 (MATSTPSRAREHASAAQSPGSPTRISRMQE). The interval 2–32 (ATSTPSRAREHASAAQSPGSPTRISRMQEKE) is head. A compositionally biased stretch (polar residues) spans 15–26 (AAQSPGSPTRIS). Ser21 carries the post-translational modification Phosphoserine. In terms of domain architecture, IF rod spans 30–386 (EKEDLRHLND…KMLEGEEQRL (357 aa)). A coil 1A region spans residues 33–67 (DLRHLNDRLAAYIERVRSLEADKSLLKIQLEEREE). Residues 68 to 79 (VSSREVTNLRQL) are linker 1. Residues 80–215 (YETELADARK…QKNIHTQEVK (136 aa)) are coil 1B. Positions 216–242 (EIKKRHDTRIVEIDSGRRVEFESKLAE) are linker 2. A coil 2 region spans residues 243 to 384 (ALQELRRDHE…YRKMLEGEEQ (142 aa)). The tract at residues 383–431 (EQRLKLSPSPSQRSTVSRASTSQTSRLLRGKKRKLDETGRSVTKRSYKV) is disordered. The segment at 385 to 580 (RLKLSPSPSQ…QSHQSVDPSC (196 aa)) is tail. A compositionally biased stretch (polar residues) spans 390 to 408 (PSPSQRSTVSRASTSQTSR). Ser391 bears the Phosphoserine mark. The LTD domain occupies 429–546 (YKVVQQASST…EECAERTLYR (118 aa)). Position 580 is a cysteine methyl ester (Cys580). Cys580 is lipidated: S-farnesyl cysteine. The propeptide at 581–583 (SIM) is removed in mature form.

This sequence belongs to the intermediate filament family. In terms of processing, phosphorylation plays a key role in lamin organization, subcellular localization and nuclear envelope disintegration. Phosphorylation by CDK1 at Ser-21 at the onset of mitosis drives lamin disassembly and nuclear envelope breakdown.

The protein localises to the nucleus lamina. Its subcellular location is the nucleus envelope. It localises to the nucleus. The protein resides in the nucleoplasm. It is found in the nucleus matrix. Lamins are intermediate filament proteins that assemble into a filamentous meshwork, and which constitute the major components of the nuclear lamina, a fibrous layer on the nucleoplasmic side of the inner nuclear membrane. Lamins provide a framework for the nuclear envelope, bridging the nuclear envelope and chromatin, thereby playing an important role in nuclear assembly, chromatin organization, nuclear membrane and telomere dynamics. The structural integrity of the lamina is strictly controlled by the cell cycle, as seen by the disintegration and formation of the nuclear envelope in prophase and telophase, respectively. This is Lamin-B3 (lmnb3.L) from Xenopus laevis (African clawed frog).